The following is a 187-amino-acid chain: ATP synthase subunit delta, chloroplastic (187 aa).

It belongs to the ATPase delta chain family. As to quaternary structure, F-type ATPases have 2 components, F(1) - the catalytic core - and F(0) - the membrane proton channel. F(1) has five subunits: alpha(3), beta(3), gamma(1), delta(1), epsilon(1). CF(0) has four main subunits: a(1), b(1), b'(1) and c(10-14). The alpha and beta chains form an alternating ring which encloses part of the gamma chain. F(1) is attached to F(0) by a central stalk formed by the gamma and epsilon chains, while a peripheral stalk is formed by the delta, b and b' chains.

Its subcellular location is the plastid. The protein resides in the chloroplast thylakoid membrane. Its function is as follows. F(1)F(0) ATP synthase produces ATP from ADP in the presence of a proton or sodium gradient. F-type ATPases consist of two structural domains, F(1) containing the extramembraneous catalytic core and F(0) containing the membrane proton channel, linked together by a central stalk and a peripheral stalk. During catalysis, ATP synthesis in the catalytic domain of F(1) is coupled via a rotary mechanism of the central stalk subunits to proton translocation. Functionally, this protein is part of the stalk that links CF(0) to CF(1). It either transmits conformational changes from CF(0) to CF(1) or is implicated in proton conduction. The protein is ATP synthase subunit delta, chloroplastic of Trieres chinensis (Marine centric diatom).